A 101-amino-acid chain; its full sequence is NAD(P)H-quinone oxidoreductase subunit 4L (101 aa).

Transmembrane regions (helical) follow at residues 3–23 (LRYFLLLAAALFCIGIYGLIT), 30–50 (VLMSIELLLNAVNLNLMAFSN), and 64–84 (VFVITVAAAEAAVGLAIVLAI).

This sequence belongs to the complex I subunit 4L family. NDH-1 can be composed of about 15 different subunits; different subcomplexes with different compositions have been identified which probably have different functions.

The protein resides in the cellular thylakoid membrane. It catalyses the reaction a plastoquinone + NADH + (n+1) H(+)(in) = a plastoquinol + NAD(+) + n H(+)(out). The catalysed reaction is a plastoquinone + NADPH + (n+1) H(+)(in) = a plastoquinol + NADP(+) + n H(+)(out). Its function is as follows. NDH-1 shuttles electrons from an unknown electron donor, via FMN and iron-sulfur (Fe-S) centers, to quinones in the respiratory and/or the photosynthetic chain. The immediate electron acceptor for the enzyme in this species is believed to be plastoquinone. Couples the redox reaction to proton translocation, and thus conserves the redox energy in a proton gradient. Cyanobacterial NDH-1 also plays a role in inorganic carbon-concentration. This chain is NAD(P)H-quinone oxidoreductase subunit 4L, found in Nostoc sp. (strain PCC 7120 / SAG 25.82 / UTEX 2576).